A 721-amino-acid chain; its full sequence is uncharacterized protein (721 aa).

The helical transmembrane segment at Gln-6–Leu-26 threads the bilayer. Residue Gly-308–Thr-315 participates in ATP binding.

Belongs to the GSP E family. This protein undergoes a protein self splicing that involves a post-translational excision of the intervening region (intein) followed by peptide ligation.

It is found in the membrane. This is an uncharacterized protein from Methanocaldococcus jannaschii (strain ATCC 43067 / DSM 2661 / JAL-1 / JCM 10045 / NBRC 100440) (Methanococcus jannaschii).